Consider the following 310-residue polypeptide: p-hydroxybenzoic acid efflux pump subunit AaeA (310 aa).

A helical transmembrane segment spans residues 12–32 (VITLLLVIIAIVLIFRIWVFY).

This sequence belongs to the membrane fusion protein (MFP) (TC 8.A.1) family.

It localises to the cell inner membrane. Forms an efflux pump with AaeB. In Erwinia tasmaniensis (strain DSM 17950 / CFBP 7177 / CIP 109463 / NCPPB 4357 / Et1/99), this protein is p-hydroxybenzoic acid efflux pump subunit AaeA.